Reading from the N-terminus, the 406-residue chain is Putative colanic acid biosynthesis glycosyltransferase WcaL (406 aa).

Belongs to the glycosyltransferase group 1 family. Glycosyltransferase 4 subfamily.

It participates in slime biogenesis; slime polysaccharide biosynthesis. The polypeptide is Putative colanic acid biosynthesis glycosyltransferase WcaL (wcaL) (Salmonella typhimurium (strain LT2 / SGSC1412 / ATCC 700720)).